A 292-amino-acid chain; its full sequence is 33 kDa chaperonin (292 aa).

2 disulfides stabilise this stretch: Cys230–Cys232 and Cys263–Cys266.

The protein belongs to the HSP33 family. Post-translationally, under oxidizing conditions two disulfide bonds are formed involving the reactive cysteines. Under reducing conditions zinc is bound to the reactive cysteines and the protein is inactive.

Its subcellular location is the cytoplasm. In terms of biological role, redox regulated molecular chaperone. Protects both thermally unfolding and oxidatively damaged proteins from irreversible aggregation. Plays an important role in the bacterial defense system toward oxidative stress. The polypeptide is 33 kDa chaperonin (Salmonella typhi).